Consider the following 27-residue polypeptide: ISSPVSXLTIHPLRNIMDMLYVGXITI.

This sequence belongs to the peptidase A1 family. In terms of processing, glycosylated. As to expression, placenta.

This is Pregnancy-associated glycoprotein 55 (PAG55) from Capra hircus (Goat).